The sequence spans 356 residues: D-alanine--D-alanine ligase (356 aa).

The 205-residue stretch at 146–350 folds into the ATP-grasp domain; that stretch reads KKLLVAEGLP…YAELLDTLIQ (205 aa). 173 to 228 serves as a coordination point for ATP; that stretch reads KERLGLPVFVKPARGGSSIGVSKVSAWEDLEAALTLAYESDDKVLIEPEISGAEVE. Asp305, Glu317, and Asn319 together coordinate Mg(2+).

The protein belongs to the D-alanine--D-alanine ligase family. Mg(2+) is required as a cofactor. Mn(2+) serves as cofactor.

Its subcellular location is the cytoplasm. The enzyme catalyses 2 D-alanine + ATP = D-alanyl-D-alanine + ADP + phosphate + H(+). Its pathway is cell wall biogenesis; peptidoglycan biosynthesis. Cell wall formation. In Corynebacterium aurimucosum (strain ATCC 700975 / DSM 44827 / CIP 107346 / CN-1) (Corynebacterium nigricans), this protein is D-alanine--D-alanine ligase.